A 256-amino-acid polypeptide reads, in one-letter code: Nuclear shuttle protein (256 aa).

The short motif at 18-39 is the Bipartite nuclear localization signal element; sequence NITNRYPIKRKYVAGHTRPCVR. The Nuclear localization signal motif lies at 81–96; the sequence is SRGPSGDGRSRDYIKL. Positions 150–187 are interaction with Arabidopsis thaliana NSI protein; it reads ELFGPYSACYVNLRLLNNQQHRYRVLHSVKRFVSSSGD.

Belongs to the begomovirus nuclear shuttle protein family. In terms of assembly, binds to single-stranded and double-stranded viral DNA. Interacts with the host nuclear shuttle interacting (NSI) protein. This interaction may allow NSP to recruit NSI monomers to the viral genome and thus regulate nuclear export of viral genome by NSP.

The protein localises to the host nucleus. Its subcellular location is the host cytoplasm. It localises to the host cell membrane. In terms of biological role, binds to the genomic viral ssDNA, shuttles it into and out of the cell nucleus. Begomoviruses use 2 proteins to transport their DNA from cell to cell. The nuclear shuttle protein (NSP) shuttles it between nucleus and cytoplasm and the movement protein (MP) probably transports the DNA-NSP complex to the cell periphery and facilitates movement across the cell wall. The polypeptide is Nuclear shuttle protein (Hewittia sublobata (Coralbush)).